Reading from the N-terminus, the 479-residue chain is Fibrinogen beta chain (479 aa).

An N-terminal signal peptide occupies residues 1 to 18 (MRHLWLLLLSVSLVQTQA). Residues 20 to 82 (TTDSDKVDLS…VERKPPDAGG (63 aa)) are disordered. Residues 33–35 (GHR) form a beta-chain polymerization, binding distal domain of another fibrin region. Composition is skewed to basic and acidic residues over residues 35–45 (RPVDRRKEEPP) and 64–78 (AKVD…RKPP). Cystine bridges form between Cys-219-Cys-304 and Cys-229-Cys-258. Positions 220-476 (NIPVVSGKEC…RMSMKIRPVF (257 aa)) constitute a Fibrinogen C-terminal domain. An N-linked (GlcNAc...) asparagine glycan is attached at Asn-382. Residues Cys-412 and Cys-425 are joined by a disulfide bond.

As to quaternary structure, heterohexamer; disulfide linked. Contains 2 sets of 3 non-identical chains (alpha, beta and gamma). The 2 heterotrimers are in head to head conformation with the N-termini in a small central domain. Post-translationally, conversion of fibrinogen to fibrin is triggered by thrombin, which cleaves fibrinopeptides A and B from alpha and beta chains, and thus exposes the N-terminal polymerization sites responsible for the formation of the soft clot.

It is found in the secreted. Its function is as follows. Cleaved by the protease thrombin to yield monomers which, together with fibrinogen alpha (FGA) and fibrinogen gamma (FGG), polymerize to form an insoluble fibrin matrix. Fibrin has a major function in hemostasis as one of the primary components of blood clots. In addition, functions during the early stages of wound repair to stabilize the lesion and guide cell migration during re-epithelialization. Was originally thought to be essential for platelet aggregation, based on in vitro studies using anticoagulated blood. However subsequent studies have shown that it is not absolutely required for thrombus formation in vivo. Enhances expression of SELP in activated platelets. Maternal fibrinogen is essential for successful pregnancy. Fibrin deposition is also associated with infection, where it protects against IFNG-mediated hemorrhage. May also facilitate the antibacterial immune response via both innate and T-cell mediated pathways. The polypeptide is Fibrinogen beta chain (Fgb) (Rattus norvegicus (Rat)).